The sequence spans 300 residues: MKIAVVGAGKWGSALYDALSVKNECAITSFHEKDLSYFVSTKEALGYEYLVFALYAQGIHEWLVNNFKDLNQKILVASKGIDCKSLKFMDEVFGEFISSDRLCFLSGPSFASEVLEKKPCALVISGKNQNLCSKFASFFPNYIKTYTSLDVKGAEICGAYKNVLAIASGVCDGLNLGNNARASLVSRGLVEMHRFGQFFNAKEETFLGLSGAGDLFLTASSNLSRNYRVGSSLASGKNIKDVLIELGEVAEGVQTAYAIHALSKQFQIYTPIVNEVVLMLEGKNAWESLKDLMSSKEEIS.

The NADPH site is built by W11, K33, and K79. Residues K79, G107, and S109 each coordinate sn-glycerol 3-phosphate. Position 111 (A111) interacts with NADPH. Sn-glycerol 3-phosphate is bound by residues K161, D214, S224, R225, and N226. The active-site Proton acceptor is K161. Residue R225 coordinates NADPH. Positions 249 and 251 each coordinate NADPH.

It belongs to the NAD-dependent glycerol-3-phosphate dehydrogenase family.

The protein resides in the cytoplasm. The catalysed reaction is sn-glycerol 3-phosphate + NAD(+) = dihydroxyacetone phosphate + NADH + H(+). It catalyses the reaction sn-glycerol 3-phosphate + NADP(+) = dihydroxyacetone phosphate + NADPH + H(+). The protein operates within membrane lipid metabolism; glycerophospholipid metabolism. Its function is as follows. Catalyzes the reduction of the glycolytic intermediate dihydroxyacetone phosphate (DHAP) to sn-glycerol 3-phosphate (G3P), the key precursor for phospholipid synthesis. This is Glycerol-3-phosphate dehydrogenase [NAD(P)+] from Campylobacter lari (strain RM2100 / D67 / ATCC BAA-1060).